Reading from the N-terminus, the 300-residue chain is Acyl-CoA-binding domain-containing protein 6 (300 aa).

Positions M1–D19 are enriched in low complexity. Positions M1–K43 are disordered. Residues L60–Q145 enclose the ACB domain. An acyl-CoA is bound by residues Y87 to K91, K113, and Y132. Positions E142–P162 are disordered. Residues S147 to T157 show a composition bias toward basic and acidic residues. 2 ANK repeats span residues E209–S238 and E242–I271. Positions S270–G300 are disordered. A compositionally biased stretch (polar residues) spans E284 to R293.

As to expression, higly expressed in the central nervous system, developing eyes, otic vesicle, and trunk muscles.

It localises to the cytoplasm. Its subcellular location is the nucleus. Functionally, binds long-chain acyl-coenzyme A molecules with a strong preference for unsaturated C18:1-CoA. Does not bind fatty acids. Plays a role in protein N-myristoylation. This Danio rerio (Zebrafish) protein is Acyl-CoA-binding domain-containing protein 6 (acbd6).